The chain runs to 1788 residues: MNINNYSITLILLIKSNLVSSCMKIINSVVVVGLYYGFFTTFSIGPSYFFLLRARVLEVGDEKEISATTIGFIAGQLMMFISIYYAPLHLALRKPHTITALVLPYLLFHFFWNNHKNFFDSVYTTGNSMRNLNIQCIFLNSLIFQLFNHFILPSSTLARLINIYMFRYNNKMLFVASSFVGWLVGHIFFMKWVELVLFWIRQNHLIRSNKYLVSELKNSMSRIFSILLFIVCIYYLGRMPSPLVTKKLKKTSKREERGKNKEETDVEIEKISEEKGTNEQQEGSAEEDPSLCSEEKEGLDKIDETEEIQVNLNGREKTKDEFNKEKYSKNSPVCENYDLDGNQDNFELKKKEKEKKNIFWFEKPLVTLLFDYKRWNRPLRYIKNDFFENAVRNEMSQYFFYTCQSDGKQKISFTYLPSLSTFLEMIQQKMLLCITEKRSYEESYNNWVYTNDEKKKNLSNELFNRIAVLDKGFLVTDVLEKRTRLCNYENEQECLPKIYDPLLNGPYRGTIKELYSRSSMNEYLIPSIEDPRDTIWINKLYDIFPTDFKELKKKKIGKRINEIKKKVFQWSYKLIDDLEEEEEEEETTEDRGIRSRKAKRVVIFNDNETTKNNASNRDQVDEVALISYSQQSDFRRDIIKGSMRAQRRKTVTWKLFQTRVHSPLFLDRIDKIFVLSFDIDRILNFIFRNWMVEVTEFKIMDSEEQKAKKKDKKKKENERITIAETWDTVLFAQTIRGCILVIQSILRKLIVLPSLIIAKNIGHMLVFKPTEWHEDFEELNKEIHVKCTYNGVQLSENEFPKNWLTDGIQIKILFPFCLKSRHRSKLQPEDSLKKKGKKQNFYFLTVWGMEAELPFGSPRKGPSFFETIWKQLKKKHKKVKVKSFVAVKIIKERTKWFGKVSNEKTKWVTKKVQFIKKIMKELTKRNSISLFELKKVSESNSNRNKTEKFSIISNKMIPEFAIRIRSIDWTNYSLTEKKMKDMADRINTIRNQIEKITKDKKSIFLTTTTDRNIRPNKTSWDDKRLEQSKIFWQIVKRGRAKIIRKCNFFFHFCIEKICIDIFLSIINIPSRNIQILFQQKKKINDKYSYNDETKKNPIHFISTIKRSIYKTTNTSNKSQILCDLSFLSQAYVFYKLSQIQVSNKYNLKSLFQYHGTIPFIKDKIKIFFGTQGIFNSESRHKNFHDFGMNEWQSWLMGNDQYQYNLSQTCWSGLVPQKWRNRINKNLANSSNFYFYEKEPLIHYEKEKNYAVNSLPSRREKLKNYKYDLLSNKYINYENNSSSSFYGLPLEVNQAHAILYNYNTYNSEVFDLSGDIDFRNYLREDYDIDRDQNSDRKYLDWRTFNFCLRKKRNIAEWTNIDIGTSTTITKKIKSQIHYYQIIDKLEKNKTDNKGFLNLAIYKQIDSANQTKVFFDWMGMNEEILNWSILNRELWFFPEFLLLYDAYKIQPWIIPLNLLLLKLNINEKQKGDLHISYNKNKSLDLENRNQEETQQPVRGDLGSYVQKENNPGSDPLKKQTDGKEDFDRSNIQRNINKKKSKSNIAAELDFFLKKYFLFQLRWDNSFSEKIINNIKIYCLLLRLKNPKEIAISSIQRDEMSMDVMLVPKATTFIKLRKRRLLLIEPARLSINWDGLFIMYQTLVILQVHNSKYQTCKKKINVDNKGLIESMARHEILFRNRDKNNYDFLIPENLLSSRRRRELRIQICLNLRNFKVGDRNREFSNENSTRSCDLFFYEDKNLDVDIKKILKFKFFLWPNYRLEDLACMNRYWFDTNNGSRFSMSRIHMYPY.

Helical transmembrane passes span 25–45, 70–90, 95–115, 132–152, 180–200, and 223–243; these read IINS…FSIG, IGFI…PLHL, PHTI…WNNH, LNIQ…HFIL, VGWL…LFWI, and IFSI…PSPL. 2 disordered regions span residues 248-297 and 1482-1526; these read LKKT…EEKE and DLEN…DFDR. Basic and acidic residues-rich tracts occupy residues 253–277 and 1513–1526; these read KREE…EKGT and PLKK…DFDR.

The protein belongs to the TIC214 family. As to quaternary structure, part of the Tic complex.

It localises to the plastid. It is found in the chloroplast inner membrane. Involved in protein precursor import into chloroplasts. May be part of an intermediate translocation complex acting as a protein-conducting channel at the inner envelope. In Ranunculus macranthus (Large buttercup), this protein is Protein TIC 214.